Here is a 364-residue protein sequence, read N- to C-terminus: tRNA 2-selenouridine synthase (364 aa).

Positions 14-137 constitute a Rhodanese domain; that stretch reads LLADTPLIDV…LRQTAIQATW (124 aa). Cys97 functions as the S-selanylcysteine intermediate in the catalytic mechanism.

It belongs to the SelU family. As to quaternary structure, monomer.

The enzyme catalyses 5-methylaminomethyl-2-thiouridine(34) in tRNA + selenophosphate + (2E)-geranyl diphosphate + H2O + H(+) = 5-methylaminomethyl-2-selenouridine(34) in tRNA + (2E)-thiogeraniol + phosphate + diphosphate. It catalyses the reaction 5-methylaminomethyl-2-thiouridine(34) in tRNA + (2E)-geranyl diphosphate = 5-methylaminomethyl-S-(2E)-geranyl-thiouridine(34) in tRNA + diphosphate. It carries out the reaction 5-methylaminomethyl-S-(2E)-geranyl-thiouridine(34) in tRNA + selenophosphate + H(+) = 5-methylaminomethyl-2-(Se-phospho)selenouridine(34) in tRNA + (2E)-thiogeraniol. The catalysed reaction is 5-methylaminomethyl-2-(Se-phospho)selenouridine(34) in tRNA + H2O = 5-methylaminomethyl-2-selenouridine(34) in tRNA + phosphate. Involved in the post-transcriptional modification of the uridine at the wobble position (U34) of tRNA(Lys), tRNA(Glu) and tRNA(Gln). Catalyzes the conversion of 2-thiouridine (S2U-RNA) to 2-selenouridine (Se2U-RNA). Acts in a two-step process involving geranylation of 2-thiouridine (S2U) to S-geranyl-2-thiouridine (geS2U) and subsequent selenation of the latter derivative to 2-selenouridine (Se2U) in the tRNA chain. The sequence is that of tRNA 2-selenouridine synthase from Salmonella dublin (strain CT_02021853).